We begin with the raw amino-acid sequence, 226 residues long: UPF0758 protein GWCH70_2550 (226 aa).

One can recognise an MPN domain in the interval 104–226 (VIRSPEDGAK…FVSLKEKGYV (123 aa)). Zn(2+)-binding residues include histidine 175, histidine 177, and aspartate 188. The JAMM motif motif lies at 175 to 188 (HNHPSGDPTPSRED).

This sequence belongs to the UPF0758 family.

The chain is UPF0758 protein GWCH70_2550 from Geobacillus sp. (strain WCH70).